Consider the following 955-residue polypeptide: Centrosomal protein of 112 kDa (955 aa).

Residues 277-954 are a coiled coil; that stretch reads QKHDADVQKI…QEELTTYQGR (678 aa).

It is found in the cytoplasm. The protein resides in the cytoskeleton. The protein localises to the microtubule organizing center. It localises to the centrosome. The chain is Centrosomal protein of 112 kDa (CEP112) from Homo sapiens (Human).